Reading from the N-terminus, the 459-residue chain is Siroheme synthase (459 aa).

Residues 1–204 are precorrin-2 dehydrogenase /sirohydrochlorin ferrochelatase; it reads MDHLPIFCQL…ADEKAVNATT (204 aa). NAD(+) is bound by residues 22–23 and 43–44; these read DV and LT. At S128 the chain carries Phosphoserine. A uroporphyrinogen-III C-methyltransferase region spans residues 216–459; sequence GEVVLVGAGP…KLNWFSNYYD (244 aa). P225 serves as a coordination point for S-adenosyl-L-methionine. D248 serves as the catalytic Proton acceptor. K270 serves as the catalytic Proton donor. Residues 301–303, I306, 331–332, M382, and G411 each bind S-adenosyl-L-methionine; these read GGD and TA.

In the N-terminal section; belongs to the precorrin-2 dehydrogenase / sirohydrochlorin ferrochelatase family. This sequence in the C-terminal section; belongs to the precorrin methyltransferase family.

It catalyses the reaction uroporphyrinogen III + 2 S-adenosyl-L-methionine = precorrin-2 + 2 S-adenosyl-L-homocysteine + H(+). It carries out the reaction precorrin-2 + NAD(+) = sirohydrochlorin + NADH + 2 H(+). The catalysed reaction is siroheme + 2 H(+) = sirohydrochlorin + Fe(2+). Its pathway is cofactor biosynthesis; adenosylcobalamin biosynthesis; precorrin-2 from uroporphyrinogen III: step 1/1. It participates in cofactor biosynthesis; adenosylcobalamin biosynthesis; sirohydrochlorin from precorrin-2: step 1/1. It functions in the pathway porphyrin-containing compound metabolism; siroheme biosynthesis; precorrin-2 from uroporphyrinogen III: step 1/1. The protein operates within porphyrin-containing compound metabolism; siroheme biosynthesis; siroheme from sirohydrochlorin: step 1/1. Its pathway is porphyrin-containing compound metabolism; siroheme biosynthesis; sirohydrochlorin from precorrin-2: step 1/1. Multifunctional enzyme that catalyzes the SAM-dependent methylations of uroporphyrinogen III at position C-2 and C-7 to form precorrin-2 via precorrin-1. Then it catalyzes the NAD-dependent ring dehydrogenation of precorrin-2 to yield sirohydrochlorin. Finally, it catalyzes the ferrochelation of sirohydrochlorin to yield siroheme. This chain is Siroheme synthase, found in Salmonella agona (strain SL483).